The chain runs to 363 residues: 4-hydroxy-2-oxovalerate aldolase 1 (363 aa).

Residues V13–A265 enclose the Pyruvate carboxyltransferase domain. R21–D22 is a binding site for substrate. Residue D22 coordinates Mn(2+). The active-site Proton acceptor is H25. Substrate contacts are provided by S175 and H204. Mn(2+) contacts are provided by H204 and H206. Y295 lines the substrate pocket.

Belongs to the 4-hydroxy-2-oxovalerate aldolase family.

It catalyses the reaction (S)-4-hydroxy-2-oxopentanoate = acetaldehyde + pyruvate. This Mycobacterium sp. (strain JLS) protein is 4-hydroxy-2-oxovalerate aldolase 1.